The primary structure comprises 418 residues: Glutamyl-tRNA reductase (418 aa).

Substrate contacts are provided by residues 49-52 (TCNR), Ser-106, 111-113 (EPQ), and Gln-117. Residue Cys-50 is the Nucleophile of the active site. 186–191 (GAGEMI) lines the NADP(+) pocket.

Belongs to the glutamyl-tRNA reductase family. As to quaternary structure, homodimer.

The catalysed reaction is (S)-4-amino-5-oxopentanoate + tRNA(Glu) + NADP(+) = L-glutamyl-tRNA(Glu) + NADPH + H(+). The protein operates within porphyrin-containing compound metabolism; protoporphyrin-IX biosynthesis; 5-aminolevulinate from L-glutamyl-tRNA(Glu): step 1/2. Functionally, catalyzes the NADPH-dependent reduction of glutamyl-tRNA(Glu) to glutamate 1-semialdehyde (GSA). The chain is Glutamyl-tRNA reductase from Alcanivorax borkumensis (strain ATCC 700651 / DSM 11573 / NCIMB 13689 / SK2).